We begin with the raw amino-acid sequence, 64 residues long: Large ribosomal subunit protein bL35 (64 aa).

Over residues 1-22 (MPKMKSHTGMGKRVRVTGKGKI) the composition is skewed to basic residues. Residues 1 to 39 (MPKMKSHTGMGKRVRVTGKGKIVKQQAGLRHNLEKKPST) form a disordered region.

Belongs to the bacterial ribosomal protein bL35 family.

In Salinispora arenicola (strain CNS-205), this protein is Large ribosomal subunit protein bL35.